Reading from the N-terminus, the 93-residue chain is Small ribosomal subunit protein uS19 (93 aa).

Belongs to the universal ribosomal protein uS19 family.

Its function is as follows. Protein S19 forms a complex with S13 that binds strongly to the 16S ribosomal RNA. This chain is Small ribosomal subunit protein uS19, found in Anaplasma marginale (strain Florida).